The following is a 352-amino-acid chain: C-C chemokine receptor type 5 (352 aa).

The Extracellular portion of the chain corresponds to 1-30; it reads MDYQVSSPTYDIDYYTSEPCQKINVKQIAA. At Y3 the chain carries Sulfotyrosine. 2 O-linked (GalNAc...) serine glycosylation sites follow: S6 and S7. Residues Y10, Y14, and Y15 each carry the sulfotyrosine modification. Disulfide bonds link C20–C269 and C101–C178. A helical membrane pass occupies residues 31–58; it reads RLLPPLYSLVFIFGFVGNILVVLILINC. The Cytoplasmic segment spans residues 59 to 68; sequence KRLKSMTDIY. A helical transmembrane segment spans residues 69-89; the sequence is LLNLAISDLLFLLTIPFWAHY. The Extracellular segment spans residues 90 to 102; it reads AAAQWDFGNTMCQ. The helical transmembrane segment at 103–124 threads the bilayer; it reads LLTGLYLIGFFSGIFFIILLTI. Residues 125–141 are Cytoplasmic-facing; that stretch reads DRYLAIVHAVFALKART. A helical membrane pass occupies residues 142–166; it reads VTFGLVTSVITWVVAVFASLPGIIF. Over 167–198 the chain is Extracellular; sequence TRSQREGLHYTCSSHFPSSQYQFWKNFQTLKI. The helical transmembrane segment at 199-218 threads the bilayer; sequence VILGLVLPLLVMVICYSGIL. Residues 219–235 are Cytoplasmic-facing; that stretch reads KTLLRCRNEKKRHRAVR. Residues 236–260 traverse the membrane as a helical segment; the sequence is LIFTIMIVYFLFWAPYNIVLLLNTF. Topologically, residues 261–277 are extracellular; the sequence is QEFFGLNNCSSSNRLDQ. The helical transmembrane segment at 278–301 threads the bilayer; the sequence is AMQVTETLGMTHCCINPIIYAFVG. Residues 302–352 are Cytoplasmic-facing; the sequence is EKFRNYLLVFFQKHLAKRFCKCCSIFQQEAPERASSVYTRSTGEQETTVGL. S-palmitoyl cysteine attachment occurs at residues C321, C323, and C324. S336, S337, and S342 each carry phosphoserine; by BARK1.

Belongs to the G-protein coupled receptor 1 family. Interacts with PRAF2. Efficient ligand binding to CCL3/MIP-1alpha and CCL4/MIP-1beta requires sulfation, O-glycosylation and sialic acid modifications. Glycosylation on Ser-6 is required for efficient binding of CCL4. Interacts with GRK2. Interacts with ARRB1 and ARRB2. Interacts with CNIH4. Interacts with S100A4; this interaction stimulates T-lymphocyte chemotaxis. Sulfated on at least 2 of the N-terminal tyrosines. Sulfation is required for efficient binding of the chemokines, CCL3 and CCL4. Post-translationally, palmitoylation in the C-terminal is important for cell surface expression. In terms of processing, phosphorylation on serine residues in the C-terminal is stimulated by binding CC chemokines especially by APO-RANTES. O-glycosylated, but not N-glycosylated. Ser-6 appears to be the major site even if Ser-7 may be also O-glycosylated. Also sialylated glycans present which contribute to chemokine binding. Thr-16 and Ser-17 may also be glycosylated and, if so, with small moieties such as a T-antigen.

The protein localises to the cell membrane. Functionally, receptor for a number of inflammatory CC-chemokines including CCL3/MIP-1-alpha, CCL4/MIP-1-beta and RANTES and subsequently transduces a signal by increasing the intracellular calcium ion level. May play a role in the control of granulocytic lineage proliferation or differentiation. Participates in T-lymphocyte migration to the infection site by acting as a chemotactic receptor. The sequence is that of C-C chemokine receptor type 5 (CCR5) from Allochrocebus lhoesti (L'Hoest's monkey).